The sequence spans 236 residues: Mitochondrial coenzyme A diphosphatase NUDT8 (236 aa).

Residues 25–172 (LRARPASAAV…HFRYTLPVFL (148 aa)) form the Nudix hydrolase domain. Position 70 is an N6-succinyllysine (lysine 70). Positions 70–91 (KCDPADQDVVHTALRETREELG) match the Nudix box motif. Mg(2+) is bound by residues glutamate 85 and glutamate 89.

This sequence belongs to the Nudix hydrolase family. In terms of assembly, monomer. The cofactor is Mg(2+). It depends on Mn(2+) as a cofactor.

The protein localises to the mitochondrion. It catalyses the reaction an acyl-CoA + H2O = an acyl-4'-phosphopantetheine + adenosine 3',5'-bisphosphate + 2 H(+). The catalysed reaction is CoA + H2O = (R)-4'-phosphopantetheine + adenosine 3',5'-bisphosphate + 2 H(+). It carries out the reaction acetyl-CoA + H2O = S-acetyl-4'-phosphopantetheine + adenosine 3',5'-bisphosphate + 2 H(+). The enzyme catalyses butanoyl-CoA + H2O = S-butanoyl-4'-phosphopantetheine + adenosine 3',5'-bisphosphate + 2 H(+). It catalyses the reaction hexanoyl-CoA + H2O = hexanoyl-4'-phosphopantetheine + adenosine 3',5'-bisphosphate + 2 H(+). The catalysed reaction is octanoyl-CoA + H2O = S-octanoyl-4'-phosphopantetheine + adenosine 3',5'-bisphosphate + 2 H(+). It carries out the reaction propanoyl-CoA + H2O = propanoyl-4'-phosphopantetheine + adenosine 3',5'-bisphosphate + 2 H(+). The enzyme catalyses malonyl-CoA + H2O = malonyl-4'-phosphopantetheine + adenosine 3',5'-bisphosphate + 2 H(+). It catalyses the reaction succinyl-CoA + H2O = succinyl-4'-phosphopantetheine + adenosine 3',5'-bisphosphate + 2 H(+). The catalysed reaction is a 5'-end CoA-ribonucleoside in mRNA + H2O = a 5'-end phospho-adenosine-phospho-ribonucleoside in mRNA + (R)-4'-phosphopantetheine + 2 H(+). Its function is as follows. Acyl-CoA diphosphatase that mediates the hydrolysis of a wide range of CoA and CoA esters yielding 3',5'-ADP and the corresponding 4'-phosphopantetheine derivative as products. Hydrolyzes short- and medium-chain acyl-CoAs, exhibiting the highest activity toward free CoA, hexanoyl-CoA, and octanoyl-CoA and the lowest activity against acetyl-CoA. Exhibits decapping activity towards dpCoA-capped RNAs in vitro. In Homo sapiens (Human), this protein is Mitochondrial coenzyme A diphosphatase NUDT8 (NUDT8).